A 526-amino-acid polypeptide reads, in one-letter code: MTLTIKIGTLNDSDQSAVHNGTENGSDFRKITPTEEEICDDVVLLWKEEPGTEDATIQHLYDRITERNQSWKLSASRFRKILNEHHLYDTDLETVSLYKDKIHFPKALDSDAKVEVKFIDDEHGRGLFAKRDFSKGQIILKENKPIVYIPPLDKLFLISNGKACARCGKALYDLTQHKIMVHYLDCEVCKAIWCSEKCKKAHASLHELLYHSWRSNRIDILHAGNWKRFVNYCEKYCFTAAFSVGLIYGSMLLDTTGEVKEQWQKLASISQRERIKLRDASGIGSTFSLLNGTTVHTEEESDNGTKKGVEKNIDDETVWEKCYELFCGAFPKASEEIDFEKFLTMIGTFNINQYNGQVYHWISFINHDCEPNAYIEQVEEHEELRLHARKPIKKGEQIRITYVNPLHGVRLRRRELRVNWGFLCQCDRCQNELSTFERVPNLEKKNADANLGVEKIDSNDNSEDGSKKSTGNRKSSMREAQPDLKEILKNGKEFELDIPETVDTQGNVRKTSVRFDSNVSVAVDER.

The 292-residue stretch at 112 to 403 (AKVEVKFIDD…KGEQIRITYV (292 aa)) folds into the SET domain. The disordered stretch occupies residues 450–492 (NLGVEKIDSNDNSEDGSKKSTGNRKSSMREAQPDLKEILKNGK). The span at 476–492 (SMREAQPDLKEILKNGK) shows a compositional bias: basic and acidic residues. Phosphoserine is present on Ser-517.

Belongs to the class V-like SAM-binding methyltransferase superfamily. Histone-lysine methyltransferase family. SET5 subfamily.

The protein localises to the nucleus. It is found in the chromosome. It localises to the cytoplasm. The enzyme catalyses L-lysyl-[histone] + S-adenosyl-L-methionine = N(6)-methyl-L-lysyl-[histone] + S-adenosyl-L-homocysteine + H(+). Histone methyltransferase that monomethylates 'Lys-5', 'Lys-8' and 'Lys-12' of histone H4 (H4K5me1, H4K8me1 and H4K12me1, respectively), thereby controlling gene expression and remodeling chromatin structures. This Saccharomyces cerevisiae (strain YJM789) (Baker's yeast) protein is Histone-lysine N-methyltransferase SET5 (SET5).